The sequence spans 830 residues: Dimethylglycine oxidase (830 aa).

Residues 14–15 (IV), 35–36 (DQ), 45–48 (STSH), Leu52, and Val174 each bind FAD. At His48 the chain carries Pros-8alpha-FAD histidine. Active-site residues include His225 and Tyr259. FAD is bound by residues Tyr259 and 360 to 363 (VWVT). Tyr539 provides a ligand contact to (6S)-5,6,7,8-tetrahydrofolate. Catalysis depends on Asp552, which acts as the For 5,10-methylenetetrahydrofolate synthesis activity. (6S)-5,6,7,8-tetrahydrofolate is bound by residues Thr554, Gly566, and 658–660 (ELY).

This sequence belongs to the GcvT family. Requires FAD as cofactor.

The catalysed reaction is N,N-dimethylglycine + O2 + H2O = sarcosine + formaldehyde + H2O2. The enzyme catalyses N,N-dimethylglycine + (6S)-5,6,7,8-tetrahydrofolate + O2 = sarcosine + (6R)-5,10-methylene-5,6,7,8-tetrahydrofolate + H2O2. Catalyzes the oxidative demethylation of N,N-dimethylglycine to yield sarcosine, formaldehyde and hydrogen peroxide. The oxidation of dimethylglycine is coupled to the synthesis of 5,10-methylenetetrahydrofolate through an unusual substrate channeling mechanism. This channeling occurs by nonbiased diffusion of the iminium intermediate through a large solvent cavity connecting active site 1 (N-terminus) and active site 2 (C-terminus). The synthesis of 5,10-methylenetetrahydrofolate (at active site 2) prevents the accumulation of formaldehyde, formed by hydrolysis of the iminium intermediate product (at active site 1). Does not oxidize sarcosine. This Arthrobacter globiformis protein is Dimethylglycine oxidase (dmg).